We begin with the raw amino-acid sequence, 57 residues long: Potassium channel toxin MeuTXKalpha2 (57 aa).

The signal sequence occupies residues 1–19 (MSRLYAIILIALVFNVIMT). Residues 20–28 (IMPDMKVEA) constitute a propeptide that is removed on maturation. 3 cysteine pairs are disulfide-bonded: C31-C47, C34-C52, and C38-C54.

It belongs to the short scorpion toxin superfamily. Potassium channel inhibitor family. Alpha-KTx 08 subfamily. In terms of tissue distribution, expressed by the venom gland.

It localises to the secreted. Its function is as follows. Inhibits Kv1.1/KCNA1, Kv1.3/KCNA3 and Shaker potassium channels. The sequence is that of Potassium channel toxin MeuTXKalpha2 from Mesobuthus eupeus (Lesser Asian scorpion).